We begin with the raw amino-acid sequence, 196 residues long: Large ribosomal subunit protein uL18 (196 aa).

Belongs to the universal ribosomal protein uL18 family. As to quaternary structure, part of the 50S ribosomal subunit. Contacts the 5S and 23S rRNAs.

This is one of the proteins that bind and probably mediate the attachment of the 5S RNA into the large ribosomal subunit, where it forms part of the central protuberance. This chain is Large ribosomal subunit protein uL18, found in Sulfurisphaera tokodaii (strain DSM 16993 / JCM 10545 / NBRC 100140 / 7) (Sulfolobus tokodaii).